The following is an 813-amino-acid chain: Protein mac-1 (813 aa).

Coiled-coil stretches lie at residues 58–89 and 122–152; these read VREA…VQEI and SDDS…TVLN. Disordered stretches follow at residues 97 to 131 and 152 to 193; these read TRKR…ERAA and NLYT…GAVS. The span at 158–172 shows a compositional bias: polar residues; sequence SAPSTPVSTPKNQAT. Residues 175–191 are compositionally biased toward low complexity; that stretch reads PPGASAAPPALPRGLGA. ATP is bound by residues 246–253 and 575–582; these read GPPGCGKT.

This sequence belongs to the AAA ATPase family. As to quaternary structure, found in a complex composed of ced-3, ced-4 and mac-1 or of ced-9, ced-4 and mac-1. Within the complex, interacts with ced-4.

In terms of biological role, probably together with ced-9, plays a modest role in preventing ced-4 and caspase ced-3-mediated apoptosis. The chain is Protein mac-1 from Caenorhabditis elegans.